We begin with the raw amino-acid sequence, 588 residues long: MITRLSTLFLRTLREDPADAEVPSHKLLVRAGYIRRVAPGIYSWLPLGLRAVRNIEAVVREEMDAIGGQELLFPALLPREPYETTQRWTEYGDSLFRLKDRKGADYLLGPTHEEMFAATVKDLYNSYKDFPVTLYQIQTKYRDEERPRAGVLRGREFVMKDSYSFDISDAGLDESYAKHRAAYQRIFDRLGLEYAICQATSGAMGGSASEEFLAVSENGEDTFVRSTSGNYAANVEAVVTQPGVERDIEGLPEAVTYETPVSETIDALVDWANSIDVQIEGREVTAADTLKCIVVKVREPGAEEAELTGILLPGDREVDMKRLEASLEPAEVELAVESDFADNPFLVKGYVGPVGLAKNGVKVLADPRVVTGTSWITGADEKERHVVGLVAGRDFTPDGFIEAAEIKEGDPAPAGEGTLTLARGIEIGHIFQLGRKYTEAFDVQILDENGKRAIPTMGSYGLGVTRLLAVLAEQRHDDAGLNWSVEVAPYQVHVVAANKDAAAIEAAERFAAELSAAGLDVLFDDRPKVSPGVKFKDAELLGMPFALILGRGYAEGKVELRVRGGEKSELDADQAVAQIVEMVAQARN.

It belongs to the class-II aminoacyl-tRNA synthetase family. ProS type 1 subfamily. As to quaternary structure, homodimer.

The protein localises to the cytoplasm. The enzyme catalyses tRNA(Pro) + L-proline + ATP = L-prolyl-tRNA(Pro) + AMP + diphosphate. Catalyzes the attachment of proline to tRNA(Pro) in a two-step reaction: proline is first activated by ATP to form Pro-AMP and then transferred to the acceptor end of tRNA(Pro). As ProRS can inadvertently accommodate and process non-cognate amino acids such as alanine and cysteine, to avoid such errors it has two additional distinct editing activities against alanine. One activity is designated as 'pretransfer' editing and involves the tRNA(Pro)-independent hydrolysis of activated Ala-AMP. The other activity is designated 'posttransfer' editing and involves deacylation of mischarged Ala-tRNA(Pro). The misacylated Cys-tRNA(Pro) is not edited by ProRS. In Corynebacterium glutamicum (strain ATCC 13032 / DSM 20300 / JCM 1318 / BCRC 11384 / CCUG 27702 / LMG 3730 / NBRC 12168 / NCIMB 10025 / NRRL B-2784 / 534), this protein is Proline--tRNA ligase.